The following is a 310-amino-acid chain: Transcription initiation factor IIB (310 aa).

The segment at 9-41 (DKQTVCPECGSTELIGDYERAEVVCAHCGLVID) adopts a TFIIB-type zinc-finger fold. Zn(2+)-binding residues include Cys14, Cys17, Cys33, and Cys36. 2 consecutive repeat copies span residues 127–210 (SELD…TREL) and 221–302 (DYVP…ELTE).

It belongs to the TFIIB family.

Its function is as follows. Stabilizes TBP binding to an archaeal box-A promoter. Also responsible for recruiting RNA polymerase II to the pre-initiation complex (DNA-TBP-TFIIB). This is Transcription initiation factor IIB from Methanobrevibacter smithii (strain ATCC 35061 / DSM 861 / OCM 144 / PS).